We begin with the raw amino-acid sequence, 396 residues long: MPRVKAAQAGRQSSAKRHLAEQFAVGEIITDMAKKEWKVGLPIGQGGFGCIYLADMNSSESVGSDAPCVVKVEPSDNGPLFTELKFYQRAAKPEQIQKWIRTRKLKYLGVPKYWGSGLHDKNGKSYRFMIMDRFGSDLQKIYEANAKRFSRKTVLQLSLRILDILEYIHEHEYVHGDIKASNLLLNYKNPDQVYLVDYGLAYRYCPEGVHKEYKEDPKRCHDGTIEFTSIDAHNGVAPSRRGDLEILGYCMIQWLTGHLPWEDNLKDPKYVRDSKIRYRENIASLMDKCFPEKNKPGEIAKYMETVKLLDYTEKPLYENLRDILLQGLKAIGSKDDGKLDLSVVENGGLKAKTITKKRKKEIEESKEPGVEDTEWSNTQTEEAIQTRSRTRKRVQK.

Residues 37 to 317 (WKVGLPIGQG…LLDYTEKPLY (281 aa)) form the Protein kinase domain. ATP is bound by residues 43-51 (IGQGGFGCI) and K71. K71 participates in a covalent cross-link: Glycyl lysine isopeptide (Lys-Gly) (interchain with G-Cter in SUMO2). The active-site Proton acceptor is the D177. A Phosphoserine; by PLK3 modification is found at S342. The tract at residues 354–396 (ITKKRKKEIEESKEPGVEDTEWSNTQTEEAIQTRSRTRKRVQK) is disordered. Position 355 is a phosphothreonine; by autocatalysis (T355). Positions 360–369 (KEIEESKEPG) are enriched in basic and acidic residues. A compositionally biased stretch (polar residues) spans 375-387 (WSNTQTEEAIQTR). S376 is subject to Phosphoserine. Residue T378 is modified to Phosphothreonine. The required for interaction with the nucleosome stretch occupies residues 387–393 (RSRTRKR).

Belongs to the protein kinase superfamily. CK1 Ser/Thr protein kinase family. VRK subfamily. Interacts with HDAC1, KAT2B, SETDB1, KDM3A and KDM4A. Associates with the nucleosome through interactions with nucleosome DNA, histone H2A and histone H2B; the interaction with H2A and H2B is mediated by the nucleosome acidic patch, a cluster of negatively charged residues of H2A and H2B forming a cleft within the nucleosome core. In terms of assembly, (Microbial infection) Interacts with vaccinia protein B12; this interaction inhibits the repressive activity of the vaccinia virus B12 pseudokinase on viral replication factory formation. Post-translationally, autophosphorylated at various serine and threonine residues. Autophosphorylation does not impair its ability to phosphorylate p53/TP53. Phosphorylation by PLK3 leads to induction of Golgi fragmentation during mitosis. Widely expressed. Highly expressed in fetal liver, testis and thymus.

It is found in the nucleus. The protein resides in the cytoplasm. The protein localises to the cajal body. It catalyses the reaction L-seryl-[protein] + ATP = O-phospho-L-seryl-[protein] + ADP + H(+). The enzyme catalyses L-threonyl-[protein] + ATP = O-phospho-L-threonyl-[protein] + ADP + H(+). Its activity is regulated as follows. Active in presence of Mn(2+), Mg(2+) and Zn(2+), but is not functional with Ca(2+) or Cu(2+). Has a higher affinity for Mn(2+) than for Mg(2+). RAN inhibits its autophosphorylation and its ability to phosphorylate histone H3. In terms of biological role, serine/threonine kinase involved in the regulation of key cellular processes including the cell cycle, nuclear condensation, transcription regulation, and DNA damage response. Controls chromatin organization and remodeling by mediating phosphorylation of histone H3 on 'Thr-4' and histone H2AX (H2aXT4ph). It also phosphorylates KAT5 in response to DNA damage, promoting KAT5 association with chromatin and histone acetyltransferase activity. Is involved in the regulation of cell cycle progression of neural progenitors, and is required for proper cortical neuronal migration. Is involved in neurite elongation and branching in motor neurons, and has an essential role in Cajal bodies assembly, acting through COIL phosphorylation and the control of coilin degradation. Involved in Golgi disassembly during the cell cycle: following phosphorylation by PLK3 during mitosis, it is required to induce Golgi fragmentation. Phosphorylates BANF1: disrupts its ability to bind DNA, reduces its binding to LEM domain-containing proteins and causes its relocalization from the nucleus to the cytoplasm. Phosphorylates TP53BP1 and p53/TP53 on 'Thr-18', preventing the interaction between p53/TP53 and MDM2. Phosphorylates ATF2 which activates its transcriptional activity. Phosphorylates JUN. The polypeptide is Serine/threonine-protein kinase VRK1 (Homo sapiens (Human)).